The primary structure comprises 1138 residues: Protein RECOGNITION OF PERONOSPORA PARASITICA 7 (1138 aa).

Residues 166–422 (EENVKKLVGY…CNYVLSLSFE (257 aa)) form the NB-ARC domain. Residue 189–196 (GMGGLGKT) coordinates ATP. LRR repeat units lie at residues 544 to 565 (QYPT…SLVV), 566 to 581 (VTLG…FTRL), 582 to 606 (ELLR…IGKL), 607 to 631 (IHLR…NLKL), 655 to 680 (MQEL…NLVK), 681 to 705 (LETL…RLRT), 707 to 726 (TIEL…IGGL), 727 to 752 (KYLE…VFDF), 754 to 774 (HLKR…QHFP), 775 to 797 (SHLT…ILEK), 798 to 825 (LLQL…GFPQ), 847 to 871 (MPLL…HLPS), 873 to 893 (LTAI…LERL), 894 to 918 (VHLK…GFPQ), 940 to 963 (MPRL…GFPQ), 1028 to 1050 (LEKL…RMVC), 1055 to 1078 (FPQL…QGSM), 1079 to 1103 (PLLH…RFIY), and 1115 to 1138 (KKRL…EFDD).

This sequence belongs to the disease resistance NB-LRR family.

Its function is as follows. Disease resistance protein required for incompatible interactions with avirulent strains of Hyaloperonospora arabidopsidis (downy mildew), isolate Hpa-Hiks1 in cv. Columbia. This is Protein RECOGNITION OF PERONOSPORA PARASITICA 7 from Arabidopsis thaliana (Mouse-ear cress).